The sequence spans 92 residues: Small ribosomal subunit protein uS19 (92 aa).

This sequence belongs to the universal ribosomal protein uS19 family.

Its function is as follows. Protein S19 forms a complex with S13 that binds strongly to the 16S ribosomal RNA. The protein is Small ribosomal subunit protein uS19 of Anoxybacillus flavithermus (strain DSM 21510 / WK1).